Consider the following 491-residue polypeptide: Ketol-acid reductoisomerase (NADP(+)) (491 aa).

The region spanning 15–208 is the KARI N-terminal Rossmann domain; the sequence is AQLGKCRFMG…GGHRAGVLES (194 aa). Residues 45 to 48, R68, R76, S78, and 108 to 110 contribute to the NADP(+) site; these read CGAQ and DKQ. Residue H132 is part of the active site. G158 contributes to the NADP(+) binding site. 2 KARI C-terminal knotted domains span residues 209–344 and 345–484; these read SFVA…TAPQ and YEGK…MTDM. Mg(2+) contacts are provided by D217, E221, E389, and E393. S414 provides a ligand contact to substrate.

This sequence belongs to the ketol-acid reductoisomerase family. Requires Mg(2+) as cofactor.

It carries out the reaction (2R)-2,3-dihydroxy-3-methylbutanoate + NADP(+) = (2S)-2-acetolactate + NADPH + H(+). The catalysed reaction is (2R,3R)-2,3-dihydroxy-3-methylpentanoate + NADP(+) = (S)-2-ethyl-2-hydroxy-3-oxobutanoate + NADPH + H(+). The protein operates within amino-acid biosynthesis; L-isoleucine biosynthesis; L-isoleucine from 2-oxobutanoate: step 2/4. It participates in amino-acid biosynthesis; L-valine biosynthesis; L-valine from pyruvate: step 2/4. Functionally, involved in the biosynthesis of branched-chain amino acids (BCAA). Catalyzes an alkyl-migration followed by a ketol-acid reduction of (S)-2-acetolactate (S2AL) to yield (R)-2,3-dihydroxy-isovalerate. In the isomerase reaction, S2AL is rearranged via a Mg-dependent methyl migration to produce 3-hydroxy-3-methyl-2-ketobutyrate (HMKB). In the reductase reaction, this 2-ketoacid undergoes a metal-dependent reduction by NADPH to yield (R)-2,3-dihydroxy-isovalerate. In Klebsiella pneumoniae (strain 342), this protein is Ketol-acid reductoisomerase (NADP(+)).